Reading from the N-terminus, the 1155-residue chain is DNA-directed RNA polymerase subunit beta (1155 aa).

The protein belongs to the RNA polymerase beta chain family. The RNAP catalytic core consists of 2 alpha, 1 beta, 1 beta' and 1 omega subunit. When a sigma factor is associated with the core the holoenzyme is formed, which can initiate transcription.

The catalysed reaction is RNA(n) + a ribonucleoside 5'-triphosphate = RNA(n+1) + diphosphate. Its function is as follows. DNA-dependent RNA polymerase catalyzes the transcription of DNA into RNA using the four ribonucleoside triphosphates as substrates. This Thermobifida fusca (strain YX) protein is DNA-directed RNA polymerase subunit beta.